We begin with the raw amino-acid sequence, 126 residues long: Large ribosomal subunit protein bL12 (126 aa).

It belongs to the bacterial ribosomal protein bL12 family. In terms of assembly, homodimer. Part of the ribosomal stalk of the 50S ribosomal subunit. Forms a multimeric L10(L12)X complex, where L10 forms an elongated spine to which 2 to 4 L12 dimers bind in a sequential fashion. Binds GTP-bound translation factors.

Functionally, forms part of the ribosomal stalk which helps the ribosome interact with GTP-bound translation factors. Is thus essential for accurate translation. The sequence is that of Large ribosomal subunit protein bL12 from Corynebacterium diphtheriae (strain ATCC 700971 / NCTC 13129 / Biotype gravis).